The primary structure comprises 104 residues: UPF0235 protein M446_3939 (104 aa).

Belongs to the UPF0235 family.

The chain is UPF0235 protein M446_3939 from Methylobacterium sp. (strain 4-46).